The primary structure comprises 340 residues: Outer membrane protein U (340 aa).

The N-terminal stretch at 1-21 is a signal peptide; that stretch reads MKKTLIALSVSAAAVATGVNA.

This sequence belongs to the Gram-negative porin family. As to quaternary structure, homotrimer.

Its subcellular location is the cell outer membrane. In terms of biological role, forms pores that allow passive diffusion of small molecules across the outer membrane. The sequence is that of Outer membrane protein U (ompU) from Vibrio vulnificus (strain CMCP6).